Consider the following 138-residue polypeptide: Small ribosomal subunit protein uS12 (138 aa).

Residues 33-55 are disordered; the sequence is KEHTNVSSPQKRGVCTRVGTMTP. A 3-methylthioaspartic acid modification is found at Asp-102.

The protein belongs to the universal ribosomal protein uS12 family. Part of the 30S ribosomal subunit. Contacts proteins S8 and S17. May interact with IF1 in the 30S initiation complex.

In terms of biological role, with S4 and S5 plays an important role in translational accuracy. Interacts with and stabilizes bases of the 16S rRNA that are involved in tRNA selection in the A site and with the mRNA backbone. Located at the interface of the 30S and 50S subunits, it traverses the body of the 30S subunit contacting proteins on the other side and probably holding the rRNA structure together. The combined cluster of proteins S8, S12 and S17 appears to hold together the shoulder and platform of the 30S subunit. This is Small ribosomal subunit protein uS12 from Bacillus licheniformis (strain ATCC 14580 / DSM 13 / JCM 2505 / CCUG 7422 / NBRC 12200 / NCIMB 9375 / NCTC 10341 / NRRL NRS-1264 / Gibson 46).